A 430-amino-acid polypeptide reads, in one-letter code: Trigger factor (430 aa).

The region spanning Gly-157–Pro-242 is the PPIase FKBP-type domain.

Belongs to the FKBP-type PPIase family. Tig subfamily.

The protein resides in the cytoplasm. It catalyses the reaction [protein]-peptidylproline (omega=180) = [protein]-peptidylproline (omega=0). Involved in protein export. Acts as a chaperone by maintaining the newly synthesized protein in an open conformation. Functions as a peptidyl-prolyl cis-trans isomerase. The chain is Trigger factor from Xanthomonas campestris pv. campestris (strain ATCC 33913 / DSM 3586 / NCPPB 528 / LMG 568 / P 25).